Consider the following 463-residue polypeptide: MEKPSRETFEGNNKLLIGIVLSVITFWLFAQSLVNVVPILEDSFNTDIGTVNIAVSITALFSGMFVVGAGGLADKYGRIKLTNIGIILNILGSLLIIISNIPLLLIIGRLIQGLSAACIMPATLSIIKSYYIGKDRQRALSYWSIGSWGGSGVCSFFGGAVATLLGWRWIFILSIIISLIALFLIKGTPETKSKSISLNKFDIKGLVLLVIMLLSLNILITKGSELGVTSLLFITILAIAIVSFSLFIVLEKRATNPLIDFKLFKNKAYTGATASNFLLNGVAGTLIVANTFVQRGLGYSSLQAGSLSITYLVMVLIMIRVGEKLLQTFGCKKPMLIGTAVLIVGECLISLTFLPEILYVICCIIGYLFFGLGLGIYATPSTDTAIANAPLEKVGVAAGIYKMASALGGAFGVALSGAVYAIVSNMTNIDTGAMIALWLNAGMGILSFVIILLLVPKQNDTQL.

14 helical membrane-spanning segments follow: residues 17-37 (IGIV…VNVV), 53-73 (IAVS…GGLA), 86-106 (IILN…LLLI), 107-127 (IGRL…LSII), 142-162 (YWSI…GAVA), 165-185 (LGWR…LFLI), 201-221 (FDIK…ILIT), 230-250 (SLLF…FIVL), 273-293 (TASN…NTFV), 299-319 (YSSL…LIMI), 334-354 (PMLI…LTFL), 357-377 (ILYV…LGIY), 403-423 (MASA…YAIV), and 435-455 (IALW…LLLV).

This sequence belongs to the major facilitator superfamily. TCR/Tet family.

Its subcellular location is the cell membrane. In terms of biological role, multidrug efflux pump that acts independently of NorA and is one of the factors that confers resistance against diverse quinolones and chemical compounds. The protein is Quinolone resistance protein NorB (norB) of Staphylococcus aureus (strain MRSA252).